A 630-amino-acid chain; its full sequence is tRNA uridine 5-carboxymethylaminomethyl modification enzyme MnmG (630 aa).

13 to 18 (GGGHAG) serves as a coordination point for FAD. 273–287 (GPRYCPSIEDKVNRF) lines the NAD(+) pocket.

This sequence belongs to the MnmG family. In terms of assembly, homodimer. Heterotetramer of two MnmE and two MnmG subunits. Requires FAD as cofactor.

It localises to the cytoplasm. Functionally, NAD-binding protein involved in the addition of a carboxymethylaminomethyl (cmnm) group at the wobble position (U34) of certain tRNAs, forming tRNA-cmnm(5)s(2)U34. This is tRNA uridine 5-carboxymethylaminomethyl modification enzyme MnmG from Saccharophagus degradans (strain 2-40 / ATCC 43961 / DSM 17024).